We begin with the raw amino-acid sequence, 510 residues long: Maturase K (510 aa).

It belongs to the intron maturase 2 family. MatK subfamily.

It localises to the plastid. The protein localises to the chloroplast. Functionally, usually encoded in the trnK tRNA gene intron. Probably assists in splicing its own and other chloroplast group II introns. The protein is Maturase K of Mammillaria haageana (Cactus).